Consider the following 112-residue polypeptide: MQVADISLQGDAKKGANLFKTRCAQCHTLKAGEGNKIGPELHGLFGRKTGSVAGYSYTDANKQKGIEWKDDTLFEYLENPKKYIPGTKMAFGGLKKPKDRNDLITFLEEETK.

Heme c is bound by residues C23, C26, and H27. The residue at position 81 (K81) is an N6,N6,N6-trimethyllysine. Residue M89 coordinates heme c. Residue K95 is modified to N6,N6,N6-trimethyllysine.

It belongs to the cytochrome c family. Post-translationally, binds 1 heme c group covalently per subunit.

It is found in the mitochondrion intermembrane space. Functionally, electron carrier protein. The oxidized form of the cytochrome c heme group can accept an electron from the heme group of the cytochrome c1 subunit of cytochrome reductase. Cytochrome c then transfers this electron to the cytochrome oxidase complex, the final protein carrier in the mitochondrial electron-transport chain. In Arabidopsis thaliana (Mouse-ear cress), this protein is Cytochrome c (CC-1).